A 256-amino-acid polypeptide reads, in one-letter code: Hypodermin-A (256 aa).

The N-terminal stretch at 1–22 is a signal peptide; that stretch reads MLKFVILLCSIAYVFGAVVPLG. Positions 23-30 are cleaved as a propeptide — activation peptide; that stretch reads MLSQSDGR. The region spanning 31–254 is the Peptidase S1 domain; it reads IVGGVESKIE…VRSLIVSNAE (224 aa). Residues C56 and C72 are joined by a disulfide bond. Residues H71 and D116 each act as charge relay system in the active site. 2 cysteine pairs are disulfide-bonded: C180–C197 and C206–C230. The Charge relay system role is filled by S210.

It belongs to the peptidase S1 family.

It localises to the secreted. In terms of biological role, specificity, limited to carboxyl side of arginine residue in B-chain of insulin. This Hypoderma lineatum (Early cattle grub) protein is Hypodermin-A.